The sequence spans 571 residues: Potassium-transporting ATPase potassium-binding subunit (571 aa).

The next 12 helical transmembrane spans lie at 5–25, 64–84, 136–156, 179–199, 220–240, 254–274, 285–305, 330–350, 375–395, 421–441, 488–508, and 527–547; these read GWMQ…PLGG, LAYA…LYAL, GLTH…VALI, LYVL…QGMP, VGPV…GGFF, LSNF…TNVF, WAIL…TYWA, FGIA…CGAV, IIGG…VAIF, MLGI…ATVV, LAIG…AIAG, and GGLF…LTFF.

This sequence belongs to the KdpA family. As to quaternary structure, the system is composed of three essential subunits: KdpA, KdpB and KdpC.

It is found in the cell inner membrane. Its function is as follows. Part of the high-affinity ATP-driven potassium transport (or Kdp) system, which catalyzes the hydrolysis of ATP coupled with the electrogenic transport of potassium into the cytoplasm. This subunit binds the periplasmic potassium ions and delivers the ions to the membrane domain of KdpB through an intramembrane tunnel. This is Potassium-transporting ATPase potassium-binding subunit from Methylorubrum extorquens (strain CM4 / NCIMB 13688) (Methylobacterium extorquens).